The chain runs to 129 residues: D-ribose pyranase (129 aa).

Residue histidine 20 is the Proton donor of the active site. Substrate-binding positions include aspartate 28, histidine 96, and 118–120 (YAN).

It belongs to the RbsD / FucU family. RbsD subfamily. In terms of assembly, homodecamer.

Its subcellular location is the cytoplasm. It carries out the reaction beta-D-ribopyranose = beta-D-ribofuranose. It functions in the pathway carbohydrate metabolism; D-ribose degradation; D-ribose 5-phosphate from beta-D-ribopyranose: step 1/2. In terms of biological role, catalyzes the interconversion of beta-pyran and beta-furan forms of D-ribose. This is D-ribose pyranase from Streptomyces avermitilis (strain ATCC 31267 / DSM 46492 / JCM 5070 / NBRC 14893 / NCIMB 12804 / NRRL 8165 / MA-4680).